The chain runs to 427 residues: 3-phosphoshikimate 1-carboxyvinyltransferase (427 aa).

3-phosphoshikimate-binding residues include Lys-22, Ser-23, and Arg-27. Residue Lys-22 participates in phosphoenolpyruvate binding. Positions 96 and 124 each coordinate phosphoenolpyruvate. The 3-phosphoshikimate site is built by Ser-169, Ser-170, Gln-171, Ser-197, Asp-313, Asn-336, and Lys-340. Gln-171 contributes to the phosphoenolpyruvate binding site. The Proton acceptor role is filled by Asp-313. Residues Arg-344, Arg-386, and Lys-411 each coordinate phosphoenolpyruvate.

It belongs to the EPSP synthase family. As to quaternary structure, monomer.

The protein localises to the cytoplasm. The enzyme catalyses 3-phosphoshikimate + phosphoenolpyruvate = 5-O-(1-carboxyvinyl)-3-phosphoshikimate + phosphate. The protein operates within metabolic intermediate biosynthesis; chorismate biosynthesis; chorismate from D-erythrose 4-phosphate and phosphoenolpyruvate: step 6/7. Functionally, catalyzes the transfer of the enolpyruvyl moiety of phosphoenolpyruvate (PEP) to the 5-hydroxyl of shikimate-3-phosphate (S3P) to produce enolpyruvyl shikimate-3-phosphate and inorganic phosphate. The polypeptide is 3-phosphoshikimate 1-carboxyvinyltransferase (Salmonella typhimurium (strain LT2 / SGSC1412 / ATCC 700720)).